Reading from the N-terminus, the 63-residue chain is Large ribosomal subunit protein bL32 (63 aa).

This sequence belongs to the bacterial ribosomal protein bL32 family.

This is Large ribosomal subunit protein bL32 (rpmF) from Aquifex aeolicus (strain VF5).